The following is a 209-amino-acid chain: Large ribosomal subunit protein bL9 (209 aa).

Positions 181–209 (EASEEGQELAAQREATEDAGADESEETEA) are disordered. Residues 197-209 (EDAGADESEETEA) show a composition bias toward acidic residues.

Belongs to the bacterial ribosomal protein bL9 family.

Binds to the 23S rRNA. This is Large ribosomal subunit protein bL9 from Maricaulis maris (strain MCS10) (Caulobacter maris).